The following is a 731-amino-acid chain: 1,4-alpha-glucan branching enzyme GlgB (731 aa).

The active-site Nucleophile is the Asp412. Residue Glu465 is the Proton donor of the active site.

This sequence belongs to the glycosyl hydrolase 13 family. GlgB subfamily. In terms of assembly, monomer.

It carries out the reaction Transfers a segment of a (1-&gt;4)-alpha-D-glucan chain to a primary hydroxy group in a similar glucan chain.. It functions in the pathway glycan biosynthesis; glycogen biosynthesis. Its function is as follows. Catalyzes the formation of the alpha-1,6-glucosidic linkages in glycogen by scission of a 1,4-alpha-linked oligosaccharide from growing alpha-1,4-glucan chains and the subsequent attachment of the oligosaccharide to the alpha-1,6 position. In Bordetella pertussis (strain Tohama I / ATCC BAA-589 / NCTC 13251), this protein is 1,4-alpha-glucan branching enzyme GlgB.